Here is a 263-residue protein sequence, read N- to C-terminus: MADWLIGIIMGAVEGLTEFLPVSSTGHMILTGHLIGFDDDRAKVFEVVIQLGSILAVVVIFWKRLWSLVGIGKVTDGPSLNLLHIIIGMIPAGVLGVLFHSAIKEVLFGPGPVVISLVAGGILMIVAEKFSKPSTARTLDEITYKQAFTIGMFQCLALWPGFSRSGSTISGGLLARVSHTAAAEYTFILAVPMMVAASGLDLIKSWDILSTADIQLFATGFITAFVVAMLAIVSFLKLLSRVKLTPFAYYRFILAAVFYFFIM.

The next 8 helical transmembrane spans lie at 15-37 (GLTE…LIGF), 42-62 (AKVF…VIFW), 83-103 (LHII…HSAI), 106-126 (VLFG…LMIV), 142-162 (ITYK…WPGF), 183-203 (AEYT…LDLI), 216-236 (LFAT…VSFL), and 242-262 (VKLT…YFFI).

This sequence belongs to the UppP family.

Its subcellular location is the cell membrane. The catalysed reaction is di-trans,octa-cis-undecaprenyl diphosphate + H2O = di-trans,octa-cis-undecaprenyl phosphate + phosphate + H(+). Catalyzes the dephosphorylation of undecaprenyl diphosphate (UPP). Confers resistance to bacitracin. The protein is Undecaprenyl-diphosphatase 3 of Bacillus thuringiensis subsp. konkukian (strain 97-27).